Here is a 298-residue protein sequence, read N- to C-terminus: Quinolinate synthase (298 aa).

The iminosuccinate site is built by His-19 and Ser-36. [4Fe-4S] cluster is bound at residue Cys-81. Residues 107–109 and Ser-124 each bind iminosuccinate; that span reads YVN. Residue Cys-168 participates in [4Fe-4S] cluster binding. Residues 193–195 and Thr-210 contribute to the iminosuccinate site; that span reads HPE. Position 254 (Cys-254) interacts with [4Fe-4S] cluster.

This sequence belongs to the quinolinate synthase family. Type 2 subfamily. It depends on [4Fe-4S] cluster as a cofactor.

The protein localises to the cytoplasm. It catalyses the reaction iminosuccinate + dihydroxyacetone phosphate = quinolinate + phosphate + 2 H2O + H(+). The protein operates within cofactor biosynthesis; NAD(+) biosynthesis; quinolinate from iminoaspartate: step 1/1. Functionally, catalyzes the condensation of iminoaspartate with dihydroxyacetone phosphate to form quinolinate. This chain is Quinolinate synthase, found in Thermotoga sp. (strain RQ2).